The following is a 339-amino-acid chain: tRNA N6-adenosine threonylcarbamoyltransferase (339 aa).

2 residues coordinate Fe cation: H117 and H121. Substrate-binding positions include 140–144, D173, G186, and N279; that span reads VVSGG. Fe cation is bound at residue D307.

The protein belongs to the KAE1 / TsaD family. Fe(2+) serves as cofactor.

Its subcellular location is the cytoplasm. The catalysed reaction is L-threonylcarbamoyladenylate + adenosine(37) in tRNA = N(6)-L-threonylcarbamoyladenosine(37) in tRNA + AMP + H(+). Its function is as follows. Required for the formation of a threonylcarbamoyl group on adenosine at position 37 (t(6)A37) in tRNAs that read codons beginning with adenine. Is involved in the transfer of the threonylcarbamoyl moiety of threonylcarbamoyl-AMP (TC-AMP) to the N6 group of A37, together with TsaE and TsaB. TsaD likely plays a direct catalytic role in this reaction. This is tRNA N6-adenosine threonylcarbamoyltransferase from Syntrophomonas wolfei subsp. wolfei (strain DSM 2245B / Goettingen).